Here is a 297-residue protein sequence, read N- to C-terminus: Nitrogenase iron protein 2 (297 aa).

Position 14-21 (14-21 (GKGGIGKS)) interacts with ATP. Residue C102 participates in [4Fe-4S] cluster binding. At R105 the chain carries ADP-ribosylarginine; by dinitrogenase reductase ADP-ribosyltransferase. Residue C136 coordinates [4Fe-4S] cluster.

This sequence belongs to the NifH/BchL/ChlL family. In terms of assembly, homodimer. [4Fe-4S] cluster serves as cofactor. In terms of processing, the reversible ADP-ribosylation of Arg-105 inactivates the nitrogenase reductase and regulates nitrogenase activity.

The catalysed reaction is N2 + 8 reduced [2Fe-2S]-[ferredoxin] + 16 ATP + 16 H2O = H2 + 8 oxidized [2Fe-2S]-[ferredoxin] + 2 NH4(+) + 16 ADP + 16 phosphate + 6 H(+). The key enzymatic reactions in nitrogen fixation are catalyzed by the nitrogenase complex, which has 2 components: the iron protein and the molybdenum-iron protein. The protein is Nitrogenase iron protein 2 (nifH2) of Nostoc sp. (strain PCC 7120 / SAG 25.82 / UTEX 2576).